We begin with the raw amino-acid sequence, 290 residues long: Inositol monophosphatase 2 (290 aa).

Residues Glu83, Asp103, Ile105, and Asp106 each coordinate Mg(2+). Glu83 is a substrate binding site. Residues 105–108, 207–209, Gln226, and Asp233 contribute to the substrate site; these read IDGT and GSS. Asp233 contributes to the Mg(2+) binding site.

The protein belongs to the inositol monophosphatase superfamily. As to quaternary structure, homodimer. It depends on Mg(2+) as a cofactor.

It localises to the cytoplasm. It catalyses the reaction a myo-inositol phosphate + H2O = myo-inositol + phosphate. It functions in the pathway polyol metabolism; myo-inositol biosynthesis; myo-inositol from D-glucose 6-phosphate: step 2/2. Can use myo-inositol monophosphates, scylloinositol 1,4-diphosphate, glucose-1-phosphate, beta-glycerophosphate, and 2'-AMP as substrates. Has been implicated as the pharmacological target for lithium Li(+) action in brain. This is Inositol monophosphatase 2 (Impa2) from Rattus norvegicus (Rat).